A 162-amino-acid chain; its full sequence is Transcription elongation factor GreA (162 aa).

Positions 1–28 (MQKEPMLEETYRKLSEELEQLKSVERGV) form a coiled coil.

Belongs to the GreA/GreB family.

In terms of biological role, necessary for efficient RNA polymerase transcription elongation past template-encoded arresting sites. The arresting sites in DNA have the property of trapping a certain fraction of elongating RNA polymerases that pass through, resulting in locked ternary complexes. Cleavage of the nascent transcript by cleavage factors such as GreA or GreB allows the resumption of elongation from the new 3'terminus. GreA releases sequences of 2 to 3 nucleotides. The chain is Transcription elongation factor GreA from Sulfurovum sp. (strain NBC37-1).